A 664-amino-acid chain; its full sequence is Threonine--tRNA ligase (664 aa).

A TGS domain is found at 1–64; that stretch reads MSELLKITLP…TADAQLALVT (64 aa). The tract at residues 250–559 is catalytic; sequence DHRKLGNEMD…LIEHFAGRLP (310 aa). Residues C355, H406, and H536 each contribute to the Zn(2+) site.

This sequence belongs to the class-II aminoacyl-tRNA synthetase family. Homodimer. Zn(2+) is required as a cofactor.

Its subcellular location is the cytoplasm. The catalysed reaction is tRNA(Thr) + L-threonine + ATP = L-threonyl-tRNA(Thr) + AMP + diphosphate + H(+). Catalyzes the attachment of threonine to tRNA(Thr) in a two-step reaction: L-threonine is first activated by ATP to form Thr-AMP and then transferred to the acceptor end of tRNA(Thr). Also edits incorrectly charged L-seryl-tRNA(Thr). The polypeptide is Threonine--tRNA ligase (Novosphingobium aromaticivorans (strain ATCC 700278 / DSM 12444 / CCUG 56034 / CIP 105152 / NBRC 16084 / F199)).